The sequence spans 421 residues: Cell division protein FtsZ (421 aa).

Residues 26-30 (GGGGN), 132-134 (GTG), E163, R167, and N211 contribute to the GTP site.

This sequence belongs to the FtsZ family. In terms of assembly, homodimer. Polymerizes to form a dynamic ring structure in a strictly GTP-dependent manner. Interacts directly with several other division proteins.

The protein resides in the cytoplasm. Its function is as follows. Essential cell division protein that forms a contractile ring structure (Z ring) at the future cell division site. The regulation of the ring assembly controls the timing and the location of cell division. One of the functions of the FtsZ ring is to recruit other cell division proteins to the septum to produce a new cell wall between the dividing cells. Binds GTP and shows GTPase activity. The chain is Cell division protein FtsZ from Haemophilus influenzae (strain ATCC 51907 / DSM 11121 / KW20 / Rd).